The sequence spans 235 residues: Futalosine hydrolase (235 aa).

This sequence belongs to the PNP/UDP phosphorylase family. Futalosine hydrolase subfamily.

It carries out the reaction futalosine + H2O = dehypoxanthine futalosine + hypoxanthine. It participates in quinol/quinone metabolism; menaquinone biosynthesis. Catalyzes the hydrolysis of futalosine (FL) to dehypoxanthine futalosine (DHFL) and hypoxanthine, a step in the biosynthesis of menaquinone (MK, vitamin K2). Does not accept aminodeoxyfutalosine (AFL) as a substrate. This is Futalosine hydrolase from Streptomyces coelicolor (strain ATCC BAA-471 / A3(2) / M145).